The following is a 399-amino-acid chain: Argininosuccinate synthase (399 aa).

Position 8–16 (8–16 (AYSGGLDTS)) interacts with ATP. Y87 contributes to the L-citrulline binding site. Position 117 (G117) interacts with ATP. T119, N123, and D124 together coordinate L-aspartate. N123 is a binding site for L-citrulline. L-citrulline contacts are provided by R127, S175, E259, and Y271.

It belongs to the argininosuccinate synthase family. Type 1 subfamily. In terms of assembly, homotetramer.

It localises to the cytoplasm. It carries out the reaction L-citrulline + L-aspartate + ATP = 2-(N(omega)-L-arginino)succinate + AMP + diphosphate + H(+). It functions in the pathway amino-acid biosynthesis; L-arginine biosynthesis; L-arginine from L-ornithine and carbamoyl phosphate: step 2/3. This is Argininosuccinate synthase from Corynebacterium diphtheriae (strain ATCC 700971 / NCTC 13129 / Biotype gravis).